Consider the following 359-residue polypeptide: 3-dehydroquinate synthase (359 aa).

NAD(+)-binding positions include 71-76 (DGEAYK), 105-109 (GVIGD), 129-130 (TT), Lys142, and Lys151. Glu184, His247, and His264 together coordinate Zn(2+).

Belongs to the sugar phosphate cyclases superfamily. Dehydroquinate synthase family. Co(2+) serves as cofactor. It depends on Zn(2+) as a cofactor. Requires NAD(+) as cofactor.

It is found in the cytoplasm. It catalyses the reaction 7-phospho-2-dehydro-3-deoxy-D-arabino-heptonate = 3-dehydroquinate + phosphate. It functions in the pathway metabolic intermediate biosynthesis; chorismate biosynthesis; chorismate from D-erythrose 4-phosphate and phosphoenolpyruvate: step 2/7. Functionally, catalyzes the conversion of 3-deoxy-D-arabino-heptulosonate 7-phosphate (DAHP) to dehydroquinate (DHQ). This chain is 3-dehydroquinate synthase, found in Burkholderia vietnamiensis (strain G4 / LMG 22486) (Burkholderia cepacia (strain R1808)).